The sequence spans 983 residues: Probable serine/threonine-protein kinase mps1 (983 aa).

Residues 1 to 18 (MDTHQSFNENQHPNFNSG) show a composition bias toward polar residues. Disordered stretches follow at residues 1-26 (MDTHQSFNENQHPNFNSGNHGGINMN), 252-430 (PQQQ…NNNY), 441-460 (NNDSDTSTNPNSPASSNSSV), 513-601 (QQQQ…QQQQ), and 654-691 (QQEQQLKKTNMQPPPPKQPQPQTQTQQQQKNINNSEIV). The span at 253 to 278 (QQQQQQQQQPYEISSSSSLMSTPASS) shows a compositional bias: low complexity. Positions 279 to 301 (RHLSNRSSIVPTPNSSTKLSESI) are enriched in polar residues. 2 stretches are compositionally biased toward low complexity: residues 319 to 329 (TTTNFNTTTTT) and 348 to 371 (NNNNNFRIHSNNNNNSSANSSYNK). The segment covering 374–403 (NDEDDQDEEDEEEEDEDEDDDEEDEEEYED) has biased composition (acidic residues). Residues 380–430 (DEEDEEEEDEDEDDDEEDEEEYEDNNNNNNNNNNNNNNNNNNNNNNNNNNY) are a coiled coil. The span at 404 to 429 (NNNNNNNNNNNNNNNNNNNNNNNNNN) shows a compositional bias: low complexity. Residues 474–517 (KLDYENNVKLQQQQQQQQQQQQQQQQQQQQQQQQQYIQQQQQQQ) are a coiled coil. The segment covering 529 to 563 (NNTPTTTTTTTAATNVQNPSSSSSYISPPLSSQSS) has biased composition (low complexity). Residues 588–665 (SKLHQNNLQQ…EQQLKKTNMQ (78 aa)) adopt a coiled-coil conformation. Residues 673 to 683 (QPQTQTQQQQK) show a composition bias toward low complexity. Positions 714–981 (YLRIEFIGKG…IPTLLNHDFL (268 aa)) constitute a Protein kinase domain. Residues 720-728 (IGKGGSGKV) and lysine 742 each bind ATP. Catalysis depends on aspartate 838, which acts as the Proton acceptor.

The protein belongs to the protein kinase superfamily. Ser/Thr protein kinase family.

The catalysed reaction is L-seryl-[protein] + ATP = O-phospho-L-seryl-[protein] + ADP + H(+). It catalyses the reaction L-threonyl-[protein] + ATP = O-phospho-L-threonyl-[protein] + ADP + H(+). The polypeptide is Probable serine/threonine-protein kinase mps1 (mps1) (Dictyostelium discoideum (Social amoeba)).